We begin with the raw amino-acid sequence, 147 residues long: Leghemoglobin-1 (147 aa).

The region spanning Ser2–Ser147 is the Globin domain. Residues Tyr25 and Tyr30 each carry the nitrated tyrosine modification. Ser45 provides a ligand contact to heme b. A Phosphoserine modification is found at Ser45. His62 lines the O2 pocket. Residues Lys65, His94, and Lys97 each coordinate heme b. The residue at position 135 (Tyr135) is a Nitrated tyrosine.

Belongs to the plant globin family. In terms of assembly, monomer. Nitrated in effective nodules and particularly in hypoxic conditions; this mechanism may play a protective role in the symbiosis by buffering toxic peroxynitrite NO(2)(-). Nitration level decrease during nodule senescence. In terms of processing, phosphorylation at Ser-45 disrupts the molecular environment of its porphyrin ring oxygen binding pocket, thus leading to a reduced oxygen consumption and to the delivery of oxygen O(2) to symbiosomes. Root nodules.

Its subcellular location is the cytoplasm. It is found in the cytosol. The protein resides in the nucleus. Leghemoglobin that reversibly binds oxygen O(2) through a pentacoordinated heme iron. In root nodules, facilitates the diffusion of oxygen to the bacteroids while preventing the bacterial nitrogenase from being inactivated by buffering dioxygen, nitric oxide and carbon monoxide, and promoting the formation of reactive oxygen species (ROS, e.g. H(2)O(2)). This role is essential for symbiotic nitrogen fixation (SNF). This Medicago sativa (Alfalfa) protein is Leghemoglobin-1.